The primary structure comprises 393 residues: uncharacterized protein (393 aa).

The 140-residue stretch at 250 to 389 folds into the Flavodoxin-like domain; it reads AVIVYDTMYN…KCYEFGKRLA (140 aa).

This is an uncharacterized protein from Methanocaldococcus jannaschii (strain ATCC 43067 / DSM 2661 / JAL-1 / JCM 10045 / NBRC 100440) (Methanococcus jannaschii).